The primary structure comprises 184 residues: Photosystem I assembly protein Ycf4 (184 aa).

A run of 2 helical transmembrane segments spans residues phenylalanine 22–serine 42 and isoleucine 57–serine 77.

This sequence belongs to the Ycf4 family.

It localises to the plastid. The protein resides in the chloroplast thylakoid membrane. Functionally, seems to be required for the assembly of the photosystem I complex. This chain is Photosystem I assembly protein Ycf4, found in Platanus occidentalis (Sycamore).